We begin with the raw amino-acid sequence, 362 residues long: MAMQPWEYVYKLLMPEKAPTDWQKTFTKNIYLALAVPLTKEFEEKIEKGDIKDLKLPVYPVAFDVRFDRNAWVRETDILDILTRSGLYDNDYDFVTPINYNPRSLRYLDFDNSIPGYFPLADLELHFKRDITANPEDYGLKPIDGYKWELDRDGSYKVTSGSLFNVREAKNSGRYSVLFLDDNPRKFNMLNGFGIVRFYISLWEAPEEVRAKAKEECESAGGIYQYDYPVAYCVLPLNKKEANIKASDFILQLNEMVKSKITSEDFLKHVMVYQLPDDMVHQFPGSEQIPVKPVIGKTFQEMVKVAAKDLILGGEEKEPKQESQEQLFNPFTIDEMLTEEQQQQQEEENNATEEEGDTVKLG.

The span at 314–323 shows a compositional bias: basic and acidic residues; it reads GEEKEPKQES. The segment at 314–362 is disordered; it reads GEEKEPKQESQEQLFNPFTIDEMLTEEQQQQQEEENNATEEEGDTVKLG. Residues 345–356 are compositionally biased toward acidic residues; it reads QEEENNATEEEG.

This is an uncharacterized protein from Acidianus two-tailed virus (ATV).